We begin with the raw amino-acid sequence, 413 residues long: Palmitoyltransferase ZDHHC6 (413 aa).

Residues 1-24 (MGTFCSVVKFENLQELKRLCHWGP) lie on the Cytoplasmic side of the membrane. The chain crosses the membrane as a helical span at residues 25–45 (IIALGVIAICSAMAMIDSVLW). The Lumenal segment spans residues 46 to 57 (YWPLHTTGGSVN). The chain crosses the membrane as a helical span at residues 58–78 (FIMLINWTVMILYNYFNAMFV). Residues 79-143 (GPGFVPLGWK…NCCGYQNHAS (65 aa)) lie on the Cytoplasmic side of the membrane. The DHHC domain maps to 99–149 (QYCKVCQAYKAPRSHHCRKCNRCVMKMDHHCPWINNCCGYQNHASFTLFLL). Cys129 (S-palmitoyl cysteine intermediate) is an active-site residue. Residues 144-164 (FTLFLLLAPLGCIHAAFIFVM) form a helical membrane-spanning segment. Topologically, residues 165–194 (TMYTQLYNRLSFGWNTVKIDMSAARRDPLP) are lumenal. The chain crosses the membrane as a helical span at residues 195–215 (IIPFGLAAFAATLFALGLALG). The Cytoplasmic segment spans residues 216–413 (TTIAVGMLFF…QAPEGEKKNR (198 aa)). The region spanning 313-398 (VRSVRYKVIE…PRNCVEKCPC (86 aa)) is the SH3 domain. Residues Cys328, Cys329, and Cys343 are each lipidated (S-palmitoyl cysteine). Positions 410–413 (KKNR) match the Di-lysine motif motif.

This sequence belongs to the DHHC palmitoyltransferase family. Homooligomerizes. Interacts with SELENOK. Palmitoylated at 3 different sites by ZDHHC16. The combination of the different palmitoylation events strongly affects the quaternary assembly of ZDHHC6, its localization, stability and function. Palmitoylation at Cys-328 accelerates the turnover of ZDHHC6. Depalmitoylated by LYPLA2.

Its subcellular location is the endoplasmic reticulum membrane. The enzyme catalyses L-cysteinyl-[protein] + hexadecanoyl-CoA = S-hexadecanoyl-L-cysteinyl-[protein] + CoA. It carries out the reaction L-cysteinyl-[protein] + octadecanoyl-CoA = S-octadecanoyl-L-cysteinyl-[protein] + CoA. In terms of biological role, endoplasmic reticulum palmitoyl acyltransferase that mediates palmitoylation of proteins such as AMFR, CALX, ITPR1 and TFRC. Palmitoylates calnexin (CALX), which is required for its association with the ribosome-translocon complex and efficient folding of glycosylated proteins. Mediates palmitoylation of AMFR, promoting AMFR distribution to the peripheral endoplasmic reticulum. Together with SELENOK, palmitoylates ITPR1 in immune cells, leading to regulate ITPR1 stability and function. Stearoyltransferase that mediates stearoylation of TFRC to inhibit TFRC-mediated activation of the JNK pathway and mitochondrial fragmentation. This chain is Palmitoyltransferase ZDHHC6, found in Bos taurus (Bovine).